The chain runs to 96 residues: Large ribosomal subunit protein eL43 (96 aa).

Residues C41, C44, C59, and C62 each contribute to the Zn(2+) site. A C4-type zinc finger spans residues 41–62 (CPVCAFPKLKRAGTSIWVCEKC).

This sequence belongs to the eukaryotic ribosomal protein eL43 family. Putative zinc-binding subfamily. Part of the 50S ribosomal subunit. The cofactor is Zn(2+).

In terms of biological role, binds to the 23S rRNA. This Methanococcus maripaludis (strain DSM 14266 / JCM 13030 / NBRC 101832 / S2 / LL) protein is Large ribosomal subunit protein eL43.